Consider the following 261-residue polypeptide: MSDSISVIKEKLSEVTSENDPFFQKCIQDERKGVEKLVQSVRRKWEKEAKLLVKLKEMTQYETDLFQQGYKYIAGVDEVGRGPLAGPVVAAAVILPADFSVVGINDSKQLSEAKRDALFEKIKKEAIAIGVGIIEHDVIDQVNIYEATKLAMCEALNQLTPEPDFVLIDAMPLRYTEAELSLIKGDTKSISIAAASIIAKVTRDRLMQMYDEKYPGYDFANNMGYGTKKHLLGLDTIGICPIHRMSFSPVKESKLHFDSLN.

The 189-residue stretch at 71–259 (KYIAGVDEVG…VKESKLHFDS (189 aa)) folds into the RNase H type-2 domain. Residues Asp-77, Glu-78, and Asp-169 each contribute to the a divalent metal cation site.

This sequence belongs to the RNase HII family. Requires Mn(2+) as cofactor. Mg(2+) serves as cofactor.

It localises to the cytoplasm. It carries out the reaction Endonucleolytic cleavage to 5'-phosphomonoester.. Endonuclease that specifically degrades the RNA of RNA-DNA hybrids. The protein is Ribonuclease HII of Listeria monocytogenes serovar 1/2a (strain ATCC BAA-679 / EGD-e).